We begin with the raw amino-acid sequence, 142 residues long: MAKKSIGQLKLQVPAGAATPSPPIGPALGQRGINIMEFCKAFNAATQEMEKGAPIPVVITYYQDKSFTFSLKTPPVSFFLKKEAQLKSGSKEPGKVSVGSISRDKIRSIAESKMKDLNANDIEAAMRMVEGSARSMGLEVVG.

Belongs to the universal ribosomal protein uL11 family. Part of the ribosomal stalk of the 50S ribosomal subunit. Interacts with L10 and the large rRNA to form the base of the stalk. L10 forms an elongated spine to which L12 dimers bind in a sequential fashion forming a multimeric L10(L12)X complex. Post-translationally, one or more lysine residues are methylated.

Forms part of the ribosomal stalk which helps the ribosome interact with GTP-bound translation factors. This Bartonella tribocorum (strain CIP 105476 / IBS 506) protein is Large ribosomal subunit protein uL11.